The chain runs to 486 residues: MKVFVHGWQHKISHTRILYSLRRFYHVETPFNQNIVSGRDLESTGFAWWSGNARLINVSGKLLGAHVAHAGIMVFWTGAMTLFEVAHFIPEKPLYEQGFILIPHLATLGWGVGPGGEIINIYPYFVVGILHLISSAVLGFGGLYHALIGPDTLEESFPFFGYDWRDKNKMTTILGIHLVLLGIGSFLLVIKALFFGGVYDTWAPGGGDVRLINNPTLNPAIIFGYVLKSPFGGDGWIVSVNNMEDLIGGHVWIGVVCIAGGIWHILTKPFAWARRAFVWSGEAYLSYSLGALSLMGLTASNYVWYNNTAYPSEFYGPTGPEASQAQAFTFLVRDQRLGANVASAQGPTGLGKYLMRSPSGEIIFGGETMRFWDLRAPWVEPLRGANGLDLNKIKNDIQPWQERRAAEYMTHAPLGSLNSVGGVATEINSVNYVSPRSWLTTSHFFLGFFLFIGHLWHAGRARAAAAGFEKGINRENEAVLSMRPLD.

Residues 1 to 28 (MKVFVHGWQHKISHTRILYSLRRFYHVE) constitute a propeptide that is removed on maturation. The next 5 helical transmembrane spans lie at 82–106 (LFEV…PHLA), 147–168 (LIGP…RDKN), 191–213 (KALF…RLIN), 268–288 (KPFA…LSYS), and 304–325 (WYNN…ASQA). Position 380 (E380) interacts with [CaMn4O5] cluster. The helical transmembrane segment at 460–484 (RARAAAAGFEKGINRENEAVLSMRP) threads the bilayer.

This sequence belongs to the PsbB/PsbC family. PsbC subfamily. In terms of assembly, PSII is composed of 1 copy each of membrane proteins PsbA, PsbB, PsbC, PsbD, PsbE, PsbF, PsbH, PsbI, PsbJ, PsbK, PsbL, PsbM, PsbT, PsbX, PsbY, PsbZ, Psb30/Ycf12, at least 3 peripheral proteins of the oxygen-evolving complex and a large number of cofactors. It forms dimeric complexes. Binds multiple chlorophylls and provides some of the ligands for the Ca-4Mn-5O cluster of the oxygen-evolving complex. It may also provide a ligand for a Cl- that is required for oxygen evolution. PSII binds additional chlorophylls, carotenoids and specific lipids. is required as a cofactor.

It localises to the plastid. The protein resides in the chloroplast thylakoid membrane. Its function is as follows. One of the components of the core complex of photosystem II (PSII). It binds chlorophyll and helps catalyze the primary light-induced photochemical processes of PSII. PSII is a light-driven water:plastoquinone oxidoreductase, using light energy to abstract electrons from H(2)O, generating O(2) and a proton gradient subsequently used for ATP formation. In Gracilaria tenuistipitata var. liui (Red alga), this protein is Photosystem II CP43 reaction center protein.